A 265-amino-acid polypeptide reads, in one-letter code: Zwei Ig domain protein zig-1 (265 aa).

An N-terminal signal peptide occupies residues 1 to 17; sequence MKNLLLITFFVVSTVTA. The Extracellular portion of the chain corresponds to 18-232; sequence LGGRGSKSAL…KMVDVRSEFQ (215 aa). 2 Ig-like C2-type domains span residues 41 to 108 and 120 to 220; these read HATD…TPHG and PVVH…MLLV. 2 N-linked (GlcNAc...) asparagine glycosylation sites follow: Asn83 and Asn193. A disulfide bond links Cys155 and Cys202. Residues 233 to 253 form a helical membrane-spanning segment; that stretch reads WVYPLAVILITIFLLVVIIVF. The Cytoplasmic segment spans residues 254–265; the sequence is CEWRNKKSTSKA.

Expressed in neurons and body wall muscles.

It is found in the cell membrane. Its function is as follows. Probably not involved in maintaining the position of ASI and ASH head neuron cell bodies and ventral nerve cord axons of PVQ, PVP, RMEV, AVK and HSN neurons. The protein is Zwei Ig domain protein zig-1 of Caenorhabditis elegans.